A 255-amino-acid chain; its full sequence is 3-deoxy-manno-octulosonate cytidylyltransferase (255 aa).

It belongs to the KdsB family.

It localises to the cytoplasm. The catalysed reaction is 3-deoxy-alpha-D-manno-oct-2-ulosonate + CTP = CMP-3-deoxy-beta-D-manno-octulosonate + diphosphate. It functions in the pathway nucleotide-sugar biosynthesis; CMP-3-deoxy-D-manno-octulosonate biosynthesis; CMP-3-deoxy-D-manno-octulosonate from 3-deoxy-D-manno-octulosonate and CTP: step 1/1. It participates in bacterial outer membrane biogenesis; lipopolysaccharide biosynthesis. Its function is as follows. Activates KDO (a required 8-carbon sugar) for incorporation into bacterial lipopolysaccharide in Gram-negative bacteria. In Cellvibrio japonicus (strain Ueda107) (Pseudomonas fluorescens subsp. cellulosa), this protein is 3-deoxy-manno-octulosonate cytidylyltransferase.